Consider the following 411-residue polypeptide: UPF0761 membrane protein PA0951 (411 aa).

The next 6 membrane-spanning stretches (helical) occupy residues 36–56 (LFAVVPMMTVMFSMLSLIPAF), 92–112 (HLTWVGVVFLAVTAFTMLVTI), 132–152 (FLLYWAILSLGPLLLGAGFAV), 174–194 (LLGLMPLAFSVAAFTLLYSAV), 207–229 (GGVFTAVLFEAAKTLFGLYVSLF), and 244–264 (IFLLWIYLSWMIVLFGAVLVC).

The protein belongs to the UPF0761 family.

The protein resides in the cell inner membrane. In Pseudomonas aeruginosa (strain ATCC 15692 / DSM 22644 / CIP 104116 / JCM 14847 / LMG 12228 / 1C / PRS 101 / PAO1), this protein is UPF0761 membrane protein PA0951.